We begin with the raw amino-acid sequence, 211 residues long: Large ribosomal subunit protein eL13 (211 aa).

Lys-16 carries the post-translational modification N6-acetyllysine. Phosphoserine occurs at positions 52, 77, and 106. Glycyl lysine isopeptide (Lys-Gly) (interchain with G-Cter in SUMO2) cross-links involve residues Lys-123 and Lys-145. Lys-174 participates in a covalent cross-link: Glycyl lysine isopeptide (Lys-Gly) (interchain with G-Cter in SUMO1); alternate. Glycyl lysine isopeptide (Lys-Gly) (interchain with G-Cter in SUMO2); alternate cross-links involve residues Lys-174 and Lys-177. Lys-177 is subject to N6-acetyllysine; alternate.

Belongs to the eukaryotic ribosomal protein eL13 family. In terms of assembly, component of the 60S large ribosomal subunit (LSU). Higher levels of expression in benign breast lesions than in carcinomas.

The protein localises to the cytoplasm. Component of the ribosome, a large ribonucleoprotein complex responsible for the synthesis of proteins in the cell. The small ribosomal subunit (SSU) binds messenger RNAs (mRNAs) and translates the encoded message by selecting cognate aminoacyl-transfer RNA (tRNA) molecules. The large subunit (LSU) contains the ribosomal catalytic site termed the peptidyl transferase center (PTC), which catalyzes the formation of peptide bonds, thereby polymerizing the amino acids delivered by tRNAs into a polypeptide chain. The nascent polypeptides leave the ribosome through a tunnel in the LSU and interact with protein factors that function in enzymatic processing, targeting, and the membrane insertion of nascent chains at the exit of the ribosomal tunnel. As part of the LSU, it is probably required for its formation and the maturation of rRNAs. Plays a role in bone development. The sequence is that of Large ribosomal subunit protein eL13 (RPL13) from Homo sapiens (Human).